The following is a 418-amino-acid chain: Tryptophan synthase beta chain (418 aa).

K109 is subject to N6-(pyridoxal phosphate)lysine.

This sequence belongs to the TrpB family. In terms of assembly, tetramer of two alpha and two beta chains. It depends on pyridoxal 5'-phosphate as a cofactor.

It carries out the reaction (1S,2R)-1-C-(indol-3-yl)glycerol 3-phosphate + L-serine = D-glyceraldehyde 3-phosphate + L-tryptophan + H2O. Its pathway is amino-acid biosynthesis; L-tryptophan biosynthesis; L-tryptophan from chorismate: step 5/5. Functionally, the beta subunit is responsible for the synthesis of L-tryptophan from indole and L-serine. The chain is Tryptophan synthase beta chain from Thermus thermophilus (strain ATCC 27634 / DSM 579 / HB8).